Consider the following 668-residue polypeptide: Probable tRNA (uracil-O(2)-)-methyltransferase (668 aa).

Residues 441–460 form a disordered region; the sequence is QHTDSLHISTKSSLDKDDPP. A C3H1-type zinc finger spans residues 620–649; that stretch reads LKTRLCWFYVHHPNGCPRVAKSCPYAHGAE.

It belongs to the TRM44 family.

Its subcellular location is the cytoplasm. The enzyme catalyses uridine(44) in tRNA(Ser) + S-adenosyl-L-methionine = 2'-O-methyluridine(44) in tRNA(Ser) + S-adenosyl-L-homocysteine + H(+). Its function is as follows. Probable adenosyl-L-methionine (AdoMet)-dependent tRNA (uracil-O(2)-)-methyltransferase. The sequence is that of Probable tRNA (uracil-O(2)-)-methyltransferase (trmt44) from Xenopus laevis (African clawed frog).